We begin with the raw amino-acid sequence, 315 residues long: Malate dehydrogenase (315 aa).

Position 9–15 (9–15) interacts with NAD(+); that stretch reads GGSGNVG. Substrate-binding residues include Arg84 and Arg90. NAD(+)-binding positions include Asn97 and 120-122; that span reads VSN. Substrate contacts are provided by Asn122 and Arg153. Residue His177 is the Proton acceptor of the active site.

Belongs to the LDH/MDH superfamily.

The catalysed reaction is (S)-malate + NAD(+) = oxaloacetate + NADH + H(+). Functionally, catalyzes the reversible oxidation of malate to oxaloacetate. This Helicobacter hepaticus (strain ATCC 51449 / 3B1) protein is Malate dehydrogenase.